The following is an 84-amino-acid chain: Large ribosomal subunit protein bL28 (84 aa).

Belongs to the bacterial ribosomal protein bL28 family.

The protein is Large ribosomal subunit protein bL28 of Clostridium perfringens (strain 13 / Type A).